A 535-amino-acid chain; its full sequence is Dual specificity calcium/calmodulin-dependent 3',5'-cyclic nucleotide phosphodiesterase 1B (535 aa).

The disordered stretch occupies residues Met-1–Glu-21. Phosphoserine occurs at positions 7 and 14. Calmodulin-binding stretches follow at residues Pro-26–Glu-46 and Glu-117–Arg-140. A PDEase domain is found at Val-145–Gly-502. His-222 functions as the Proton donor in the catalytic mechanism. Zn(2+)-binding residues include His-226, His-262, Asp-263, and Asp-369. Residue Asp-263 participates in Mg(2+) binding. Disordered stretches follow at residues Pro-445 to Asn-474 and Trp-495 to Asp-535. Residues Lys-454 to Gln-463 show a composition bias toward polar residues. A phosphoserine mark is found at Ser-465 and Ser-513.

It belongs to the cyclic nucleotide phosphodiesterase family. PDE1 subfamily. As to quaternary structure, homodimer. Requires Zn(2+) as cofactor. Mg(2+) serves as cofactor.

The protein localises to the cytoplasm. The protein resides in the cytosol. It catalyses the reaction a nucleoside 3',5'-cyclic phosphate + H2O = a nucleoside 5'-phosphate + H(+). The catalysed reaction is 3',5'-cyclic GMP + H2O = GMP + H(+). It carries out the reaction 3',5'-cyclic AMP + H2O = AMP + H(+). With respect to regulation, type I PDE are activated by the binding of calmodulin in the presence of Ca(2+). Cyclic nucleotide phosphodiesterase with a dual specificity for the second messengers cAMP and cGMP, which are key regulators of many important physiological processes. Has a preference for cGMP as a substrate. In Cricetulus griseus (Chinese hamster), this protein is Dual specificity calcium/calmodulin-dependent 3',5'-cyclic nucleotide phosphodiesterase 1B.